The primary structure comprises 450 residues: Protein tweety homolog 1 (450 aa).

Topologically, residues 1 to 43 (MGAPPGYRPSAWVHLLHQLPRADFQLRPVPSGFAPRDQEYQQA) are extracellular. Residues 44 to 64 (LLLVAALAGLGLGLSLIFIAV) form a helical membrane-spanning segment. Topologically, residues 65–88 (YLIRFCCCRPPEPHGAKSPPPGGG) are cytoplasmic. Residues 89–109 (CVTWSCIAALLVGCAGIGIGF) form a helical membrane-spanning segment. Topologically, residues 110 to 214 (YGNSETSDGV…DVTFVEEYRW (105 aa)) are extracellular. Residue Asn-130 is glycosylated (N-linked (GlcNAc...) asparagine). Residues 215 to 235 (LAYVLLLLLVLLVCLFTLLGL) form a helical membrane-spanning segment. Residues 236-240 (AKQSK) are Cytoplasmic-facing. A helical membrane pass occupies residues 241-261 (WLVVVMTAMSLLVLVLSWGSM). Topologically, residues 262–390 (GLEAATAVGL…LRGLCEDALE (129 aa)) are extracellular. 2 disulfide bridges follow: Cys-275/Cys-385 and Cys-303/Cys-370. Residues Asn-284 and Asn-355 are each glycosylated (N-linked (GlcNAc...) asparagine). A helical membrane pass occupies residues 391–411 (GLLFLMLFSLLSAGALATTLC). Residues 412-450 (SLPRAWALFPPSDDYDDTDDDDPFNPQESKRFVQWQSSI) are Cytoplasmic-facing. The segment at 428-450 (DTDDDDPFNPQESKRFVQWQSSI) is disordered. Ser-440 is modified (phosphoserine).

It belongs to the tweety family. As to quaternary structure, homotetramer; disulfide-linked. Homodimer. In terms of processing, N-glycosylated. Contains high-mannose, hybrid and complex oligosaccharides. Expressed in the astrocytes (at protein level). Restricted mainly to neural tissues. Strongly expressed in brain and eye.

It localises to the cell membrane. It carries out the reaction chloride(in) = chloride(out). The enzyme catalyses L-glutamate(out) = L-glutamate(in). Its activity is regulated as follows. Inhibited by (4-[(2-butyl-6,7-dichloro-2- cyclopentyl-2,3-dihydro-1-oxo-1H-inden-5-yl)oxy]butanoic acid). Its function is as follows. Calcium-independent, swelling-dependent volume-regulated anion channel (VRAC-swell) which plays a pivotal role in the process of regulatory volume decrease (RVD) in the brain through the efflux of anions like chloride and organic osmolytes like glutamate. The sequence is that of Protein tweety homolog 1 (Ttyh1) from Mus musculus (Mouse).